Here is a 162-residue protein sequence, read N- to C-terminus: NADH-quinone oxidoreductase subunit I (162 aa).

4Fe-4S ferredoxin-type domains are found at residues 53–83 (LRRY…IESD) and 93–122 (TRYD…ETHI). Positions 63, 66, 69, 73, 102, 105, 108, and 112 each coordinate [4Fe-4S] cluster.

This sequence belongs to the complex I 23 kDa subunit family. NDH-1 is composed of 14 different subunits. Subunits NuoA, H, J, K, L, M, N constitute the membrane sector of the complex. The cofactor is [4Fe-4S] cluster.

The protein resides in the cell inner membrane. It catalyses the reaction a quinone + NADH + 5 H(+)(in) = a quinol + NAD(+) + 4 H(+)(out). Functionally, NDH-1 shuttles electrons from NADH, via FMN and iron-sulfur (Fe-S) centers, to quinones in the respiratory chain. The immediate electron acceptor for the enzyme in this species is believed to be ubiquinone. Couples the redox reaction to proton translocation (for every two electrons transferred, four hydrogen ions are translocated across the cytoplasmic membrane), and thus conserves the redox energy in a proton gradient. The chain is NADH-quinone oxidoreductase subunit I from Bordetella avium (strain 197N).